The sequence spans 542 residues: Anaerobic glycerol-3-phosphate dehydrogenase subunit A (542 aa).

10–38 is a binding site for FAD; the sequence is DVIIIGGGATGAGIARDCALRGLRVILVE.

Belongs to the FAD-dependent glycerol-3-phosphate dehydrogenase family. As to quaternary structure, composed of a catalytic GlpA/B dimer and of membrane bound GlpC. Requires FAD as cofactor. It depends on FMN as a cofactor.

The protein localises to the cell inner membrane. The enzyme catalyses a quinone + sn-glycerol 3-phosphate = dihydroxyacetone phosphate + a quinol. The protein operates within polyol metabolism; glycerol degradation via glycerol kinase pathway; glycerone phosphate from sn-glycerol 3-phosphate (anaerobic route): step 1/1. In terms of biological role, conversion of glycerol 3-phosphate to dihydroxyacetone. Uses fumarate or nitrate as electron acceptor. The sequence is that of Anaerobic glycerol-3-phosphate dehydrogenase subunit A (glpA) from Escherichia coli O157:H7.